The sequence spans 421 residues: ATP-dependent RNA helicase RhlB (421 aa).

The Q motif signature appears at T9 to A37. A Helicase ATP-binding domain is found at L40–V216. A53–T60 contacts ATP. The short motif at D162–D165 is the DEAD box element. Positions K240 to L387 constitute a Helicase C-terminal domain. Residues D389–P421 are disordered. Residues N403–S415 are compositionally biased toward polar residues.

Belongs to the DEAD box helicase family. RhlB subfamily. As to quaternary structure, component of the RNA degradosome, which is a multiprotein complex involved in RNA processing and mRNA degradation.

The protein localises to the cytoplasm. The enzyme catalyses ATP + H2O = ADP + phosphate + H(+). In terms of biological role, DEAD-box RNA helicase involved in RNA degradation. Has RNA-dependent ATPase activity and unwinds double-stranded RNA. The protein is ATP-dependent RNA helicase RhlB of Pseudoalteromonas atlantica (strain T6c / ATCC BAA-1087).